The sequence spans 57 residues: Large ribosomal subunit protein bL33 (57 aa).

The protein belongs to the bacterial ribosomal protein bL33 family.

This chain is Large ribosomal subunit protein bL33, found in Bifidobacterium longum (strain NCC 2705).